The sequence spans 374 residues: UPF0754 membrane protein NWMN_1738 (374 aa).

2 helical membrane-spanning segments follow: residues 4-24 (LFII…TNVI) and 354-374 (SLGF…AIFV).

Belongs to the UPF0754 family.

It is found in the cell membrane. The protein is UPF0754 membrane protein NWMN_1738 of Staphylococcus aureus (strain Newman).